Consider the following 265-residue polypeptide: Indole-3-glycerol phosphate synthase (265 aa).

It belongs to the TrpC family.

It carries out the reaction 1-(2-carboxyphenylamino)-1-deoxy-D-ribulose 5-phosphate + H(+) = (1S,2R)-1-C-(indol-3-yl)glycerol 3-phosphate + CO2 + H2O. The protein operates within amino-acid biosynthesis; L-tryptophan biosynthesis; L-tryptophan from chorismate: step 4/5. The protein is Indole-3-glycerol phosphate synthase of Hyphomonas neptunium (strain ATCC 15444).